We begin with the raw amino-acid sequence, 864 residues long: Valine--tRNA ligase (864 aa).

The short motif at 42-52 (PTISGKLHIGH) is the 'HIGH' region element. Residues 589-593 (KMSKS) carry the 'KMSKS' region motif. Lys-592 is an ATP binding site.

It belongs to the class-I aminoacyl-tRNA synthetase family. ValS type 2 subfamily. In terms of assembly, monomer.

Its subcellular location is the cytoplasm. It catalyses the reaction tRNA(Val) + L-valine + ATP = L-valyl-tRNA(Val) + AMP + diphosphate. Functionally, catalyzes the attachment of valine to tRNA(Val). As ValRS can inadvertently accommodate and process structurally similar amino acids such as threonine, to avoid such errors, it has a 'posttransfer' editing activity that hydrolyzes mischarged Thr-tRNA(Val) in a tRNA-dependent manner. This is Valine--tRNA ligase from Wolbachia pipientis wMel.